The primary structure comprises 465 residues: Mitochondrial-processing peptidase subunit beta (465 aa).

Histidine 79 is a binding site for Zn(2+). Residue glutamate 82 is the Proton acceptor of the active site. Residues histidine 83 and glutamate 159 each contribute to the Zn(2+) site.

The protein belongs to the peptidase M16 family. As to quaternary structure, heterodimer of an alpha subunit and a beta subunit subunits, forming the mitochondrial processing protease (MPP) in which the alpha subunit is involved in substrate recognition and binding and the beta subunit is the catalytic subunit. It depends on Zn(2+) as a cofactor.

The protein resides in the mitochondrion matrix. The catalysed reaction is Release of N-terminal transit peptides from precursor proteins imported into the mitochondrion, typically with Arg in position P2.. Binding to the alpha subunit is required for catalytic activity. In terms of biological role, catalytic subunit of the essential mitochondrial processing protease (MPP), which cleaves the mitochondrial sequence off newly imported precursors proteins. Preferentially, cleaves after an arginine at position P2. The chain is Mitochondrial-processing peptidase subunit beta (MPP1) from Blastocladiella emersonii (Aquatic fungus).